The chain runs to 82 residues: Small ribosomal subunit protein uS17 (82 aa).

It belongs to the universal ribosomal protein uS17 family. As to quaternary structure, part of the 30S ribosomal subunit.

In terms of biological role, one of the primary rRNA binding proteins, it binds specifically to the 5'-end of 16S ribosomal RNA. The protein is Small ribosomal subunit protein uS17 of Rhodopseudomonas palustris (strain HaA2).